A 127-amino-acid polypeptide reads, in one-letter code: Alkaline proteinase inhibitor (127 aa).

The N-terminal stretch at 1–26 (MNINYFVRIVPVAVVLLVGISGASMA) is a signal peptide. A disulfide bridge links Cys53 with Cys70.

This sequence belongs to the protease inhibitor I38 family.

The protein localises to the periplasm. In terms of biological role, inhibitor of the alkaline protease. The sequence is that of Alkaline proteinase inhibitor (inh) from Pseudomonas syringae pv. tomato (strain ATCC BAA-871 / DC3000).